A 418-amino-acid chain; its full sequence is Geranylgeranyl pyrophosphate synthase (418 aa).

Over residues 51–64 (TSSTGIPTSLNATP) the composition is skewed to polar residues. The disordered stretch occupies residues 51–73 (TSSTGIPTSLNATPTKPVLRPVP). Isopentenyl diphosphate is bound by residues Lys143, Arg146, and His175. Residues Asp182 and Asp186 each contribute to the Mg(2+) site. Arg191 lines the dimethylallyl diphosphate pocket. Arg192 provides a ligand contact to isopentenyl diphosphate. Dimethylallyl diphosphate is bound by residues Lys269, Thr270, Gln305, Lys322, and Lys332.

It belongs to the FPP/GGPP synthase family. It depends on Mg(2+) as a cofactor.

It is found in the cytoplasm. The enzyme catalyses isopentenyl diphosphate + dimethylallyl diphosphate = (2E)-geranyl diphosphate + diphosphate. The catalysed reaction is isopentenyl diphosphate + (2E)-geranyl diphosphate = (2E,6E)-farnesyl diphosphate + diphosphate. It catalyses the reaction isopentenyl diphosphate + (2E,6E)-farnesyl diphosphate = (2E,6E,10E)-geranylgeranyl diphosphate + diphosphate. Its pathway is isoprenoid biosynthesis; farnesyl diphosphate biosynthesis; farnesyl diphosphate from geranyl diphosphate and isopentenyl diphosphate: step 1/1. It participates in isoprenoid biosynthesis; geranyl diphosphate biosynthesis; geranyl diphosphate from dimethylallyl diphosphate and isopentenyl diphosphate: step 1/1. It functions in the pathway isoprenoid biosynthesis; geranylgeranyl diphosphate biosynthesis; geranylgeranyl diphosphate from farnesyl diphosphate and isopentenyl diphosphate: step 1/1. In terms of biological role, catalyzes the trans-addition of the three molecules of IPP onto DMAPP to form geranylgeranyl pyrophosphate. The polypeptide is Geranylgeranyl pyrophosphate synthase (GGS) (Fusarium fujikuroi (Bakanae and foot rot disease fungus)).